The chain runs to 250 residues: Probable transcriptional regulatory protein DP2908 (250 aa).

Belongs to the TACO1 family.

It is found in the cytoplasm. The sequence is that of Probable transcriptional regulatory protein DP2908 from Desulfotalea psychrophila (strain LSv54 / DSM 12343).